The sequence spans 425 residues: Kynurenine/alpha-aminoadipate aminotransferase, mitochondrial (425 aa).

Residues 1–29 constitute a mitochondrion transit peptide; it reads MNYARFITATSAARKPSTIRVMTEILSKA. Residue arginine 20 participates in substrate binding. N6-acetyllysine is present on lysine 69. Substrate-binding residues include tyrosine 74 and tyrosine 142. Residues 178 to 208 are disordered; sequence WKPEDSKNPKKNSPKFLYTVPNGNNPSGNSL. Lysine 179 carries the post-translational modification N6-acetyllysine. The span at 198–208 shows a compositional bias: polar residues; that stretch reads PNGNNPSGNSL. Asparagine 202 lines the substrate pocket. Residue lysine 263 is modified to N6-(pyridoxal phosphate)lysine; alternate. An N6-acetyllysine; alternate mark is found at lysine 263 and lysine 339. 2 positions are modified to N6-succinyllysine; alternate: lysine 263 and lysine 339. Arginine 399 provides a ligand contact to substrate. Lysine 422 carries the post-translational modification N6-acetyllysine.

The protein belongs to the class-I pyridoxal-phosphate-dependent aminotransferase family. Homodimer. Requires pyridoxal 5'-phosphate as cofactor.

The protein resides in the mitochondrion. It carries out the reaction L-kynurenine + 2-oxoglutarate = kynurenate + L-glutamate + H2O. The catalysed reaction is L-2-aminoadipate + 2-oxoglutarate = 2-oxoadipate + L-glutamate. The enzyme catalyses glycine + 2-oxoglutarate = glyoxylate + L-glutamate. It catalyses the reaction L-kynurenine + glyoxylate = kynurenate + glycine + H2O. It carries out the reaction 3-hydroxy-L-kynurenine + glyoxylate = xanthurenate + glycine + H2O. The catalysed reaction is 2-oxohexanoate + L-kynurenine = L-2-aminohexanoate + kynurenate + H2O. The enzyme catalyses 3-phenylpyruvate + L-kynurenine = kynurenate + L-phenylalanine + H2O. It catalyses the reaction 4-methylsulfanyl-2-oxobutanoate + L-kynurenine = kynurenate + L-methionine + H2O. It carries out the reaction 2-oxo-3-sulfanylpropanoate + L-kynurenine = kynurenate + L-cysteine + H2O. The catalysed reaction is indole-3-pyruvate + L-kynurenine = kynurenate + L-tryptophan + H2O. The enzyme catalyses 2-oxopentanoate + L-kynurenine = L-2-aminopentanoate + kynurenate + H2O. It catalyses the reaction 4-methyl-2-oxopentanoate + L-kynurenine = kynurenate + L-leucine + H2O. It carries out the reaction glyoxylate + L-methionine = 4-methylsulfanyl-2-oxobutanoate + glycine. The catalysed reaction is L-2-aminoadipate + glyoxylate = 2-oxoadipate + glycine. The enzyme catalyses L-tyrosine + glyoxylate = 3-(4-hydroxyphenyl)pyruvate + glycine. It catalyses the reaction glyoxylate + L-phenylalanine = 3-phenylpyruvate + glycine. It carries out the reaction L-tryptophan + glyoxylate = indole-3-pyruvate + glycine. The catalysed reaction is L-leucine + glyoxylate = 4-methyl-2-oxopentanoate + glycine. The enzyme catalyses 2-oxobutanoate + L-kynurenine = (2S)-2-aminobutanoate + kynurenate + H2O. It catalyses the reaction 2-oxoadipate + L-kynurenine = L-2-aminoadipate + kynurenate + H2O. It functions in the pathway amino-acid degradation; L-lysine degradation via saccharopine pathway; glutaryl-CoA from L-lysine: step 4/6. Transaminase with broad substrate specificity. Has transaminase activity towards aminoadipate, kynurenine, methionine and glutamate. Shows activity also towards tryptophan, aspartate and hydroxykynurenine. Accepts a variety of oxo-acids as amino-group acceptors, with a preference for 2-oxoglutarate, 2-oxocaproic acid, phenylpyruvate and alpha-oxo-gamma-methiol butyric acid. Can also use glyoxylate as amino-group acceptor (in vitro). The sequence is that of Kynurenine/alpha-aminoadipate aminotransferase, mitochondrial from Bos taurus (Bovine).